A 614-amino-acid polypeptide reads, in one-letter code: Dihydroxy-acid dehydratase (614 aa).

Asp-81 is a Mg(2+) binding site. Cys-122 serves as a coordination point for [2Fe-2S] cluster. Mg(2+)-binding residues include Asp-123 and Lys-124. Residue Lys-124 is modified to N6-carboxylysine. [2Fe-2S] cluster is bound at residue Cys-193. Residue Glu-489 participates in Mg(2+) binding. The active-site Proton acceptor is the Ser-515.

The protein belongs to the IlvD/Edd family. As to quaternary structure, homodimer. [2Fe-2S] cluster is required as a cofactor. It depends on Mg(2+) as a cofactor.

It catalyses the reaction (2R)-2,3-dihydroxy-3-methylbutanoate = 3-methyl-2-oxobutanoate + H2O. It carries out the reaction (2R,3R)-2,3-dihydroxy-3-methylpentanoate = (S)-3-methyl-2-oxopentanoate + H2O. The protein operates within amino-acid biosynthesis; L-isoleucine biosynthesis; L-isoleucine from 2-oxobutanoate: step 3/4. It functions in the pathway amino-acid biosynthesis; L-valine biosynthesis; L-valine from pyruvate: step 3/4. In terms of biological role, functions in the biosynthesis of branched-chain amino acids. Catalyzes the dehydration of (2R,3R)-2,3-dihydroxy-3-methylpentanoate (2,3-dihydroxy-3-methylvalerate) into 2-oxo-3-methylpentanoate (2-oxo-3-methylvalerate) and of (2R)-2,3-dihydroxy-3-methylbutanoate (2,3-dihydroxyisovalerate) into 2-oxo-3-methylbutanoate (2-oxoisovalerate), the penultimate precursor to L-isoleucine and L-valine, respectively. The chain is Dihydroxy-acid dehydratase from Marinomonas sp. (strain MWYL1).